Reading from the N-terminus, the 129-residue chain is Glycine cleavage system H protein (129 aa).

The Lipoyl-binding domain maps to 24 to 106 (EAVVGITEHA…YGAGWLFRIK (83 aa)). K65 is subject to N6-lipoyllysine.

This sequence belongs to the GcvH family. In terms of assembly, the glycine cleavage system is composed of four proteins: P, T, L and H. (R)-lipoate serves as cofactor.

Its function is as follows. The glycine cleavage system catalyzes the degradation of glycine. The H protein shuttles the methylamine group of glycine from the P protein to the T protein. The sequence is that of Glycine cleavage system H protein from Aeromonas hydrophila subsp. hydrophila (strain ATCC 7966 / DSM 30187 / BCRC 13018 / CCUG 14551 / JCM 1027 / KCTC 2358 / NCIMB 9240 / NCTC 8049).